Here is a 570-residue protein sequence, read N- to C-terminus: Periplasmic trehalase (570 aa).

The signal sequence occupies residues Met1 to Ala34. Residues Arg159, Trp166–Asp167, Asn203, His212–Gln214, Arg284–Glu286, and Gly317 each bind substrate. Catalysis depends on proton donor/acceptor residues Asp319 and Glu503. Position 518 (Glu518) interacts with substrate. The tract at residues Lys544–Gln570 is disordered. Positions Pro554–Gln570 are enriched in low complexity.

Belongs to the glycosyl hydrolase 37 family. As to quaternary structure, monomer.

The protein localises to the periplasm. The enzyme catalyses alpha,alpha-trehalose + H2O = alpha-D-glucose + beta-D-glucose. Provides the cells with the ability to utilize trehalose at high osmolarity by splitting it into glucose molecules that can subsequently be taken up by the phosphotransferase-mediated uptake system. In Salmonella paratyphi C (strain RKS4594), this protein is Periplasmic trehalase.